A 500-amino-acid chain; its full sequence is Cytochrome P450 monooxygenase ausI (500 aa).

Residues 8–28 form a helical membrane-spanning segment; sequence LALLGQPLVPGLMVVSAILYL. C440 contributes to the heme binding site.

It belongs to the cytochrome P450 family. Heme serves as cofactor.

The protein resides in the membrane. It functions in the pathway secondary metabolite biosynthesis; terpenoid biosynthesis. Functionally, cytochrome P450 monooxygenase; part of the gene cluster B that mediates the biosynthesis of the fungal meroterpenoid acetoxydehydroaustin. The first step of the pathway is the synthesis of 3,5-dimethylorsellinic acid by the polyketide synthase ausA. 3,5-dimethylorsellinic acid is then prenylated by the polyprenyl transferase ausN. Further epoxidation by the FAD-dependent monooxygenase ausM and cyclization by the probable terpene cyclase ausL lead to the formation of protoaustinoid A. Protoaustinoid A is then oxidized to spiro-lactone preaustinoid A3 by the combined action of the FAD-binding monooxygenases ausB and ausC, and the dioxygenase ausE. Acid-catalyzed keto-rearrangement and ring contraction of the tetraketide portion of preaustinoid A3 by ausJ lead to the formation of preaustinoid A4. The aldo-keto reductase ausK, with the help of ausH, is involved in the next step by transforming preaustinoid A4 into isoaustinone which is in turn hydroxylated by the P450 monooxygenase ausI to form austinolide. The cytochrome P450 monooxygenase ausG then modifies austinolide to austinol. Austinol is further acetylated to austin by the O-acetyltransferase ausP, which spontaneously changes to dehydroaustin. The cytochrome P450 monooxygenase then converts dehydroaustin is into 7-dehydrodehydroaustin. The hydroxylation catalyzed by ausR permits the second O-acetyltransferase ausQ to add an additional acetyl group to the molecule, leading to the formation of acetoxydehydroaustin. Due to genetic rearrangements of the clusters and the subsequent loss of some enzymes, the end product of the Penicillium brasilianum austinoid biosynthesis clusters is acetoxydehydroaustin. The chain is Cytochrome P450 monooxygenase ausI from Penicillium brasilianum.